Here is a 292-residue protein sequence, read N- to C-terminus: Large ribosomal subunit protein bL19m (292 aa).

Residues 40–61 are disordered; sequence PVRQQSTGPSEPGAFQPPPKPV. At Ser77 the chain carries Phosphoserine.

This sequence belongs to the bacterial ribosomal protein bL19 family. In terms of assembly, component of the mitochondrial ribosome large subunit (39S) which comprises a 16S rRNA and about 50 distinct proteins.

The protein localises to the mitochondrion. The chain is Large ribosomal subunit protein bL19m (MRPL19) from Pongo abelii (Sumatran orangutan).